Here is a 920-residue protein sequence, read N- to C-terminus: Anoctamin-4 (920 aa).

The Cytoplasmic segment spans residues 1-323 (METSSSGITN…LYFAWLGWYT (323 aa)). Residues 38–64 (KDDDSLLHPGNLTSTSDDASRLEAGGE) form a disordered region. A helical membrane pass occupies residues 324–344 (GMLFPAAFIGLFVFLYGVITL). The Extracellular segment spans residues 345-389 (DHCQVSKEVCQATDIIMCPVCDKYCPFMRLSDSCVYAKVTHLFDN). The chain crosses the membrane as a helical span at residues 390-410 (GATVFFAVFMAVWATVFLEFW). Over 411–470 (KRRRAVIAYDWDLIDWEEEEEEIRPQFEAKYSKKERMNPISGKPEPYQAFADKCSRLIVS) the chain is Cytoplasmic. A helical membrane pass occupies residues 471-491 (ASGIFFMICVVIAAVFGIVIY). At 492–512 (RVVTVSTFAAFKWALIRNNSQ) the chain is on the extracellular side. A glycan (N-linked (GlcNAc...) asparagine) is linked at Asn-509. Residues 513–533 (VATTGTAVCINFCIIMLLNVL) form a helical membrane-spanning segment. The Cytoplasmic portion of the chain corresponds to 534–560 (YEKVALLLTNLEQPRTESEWENSFTLK). The chain crosses the membrane as a helical span at residues 561–581 (MFLFQFVNLNSSTFYIAFFLG). Topologically, residues 582-680 (RFTGHPGAYL…AYGLFDEYLE (99 aa)) are extracellular. A helical membrane pass occupies residues 681–701 (MILQFGFTTIFVAAFPLAPLL). The Cytoplasmic segment spans residues 702 to 733 (ALLNNIIEIRLDAYKFVTQWRRPLASRAKDIG). A helical membrane pass occupies residues 734–754 (IWYGILEGIGILSVITNAFVI). Topologically, residues 755-850 (AITSDFIPRL…QFWHVLAARL (96 aa)) are extracellular. Residues Asn-789 and Asn-802 are each glycosylated (N-linked (GlcNAc...) asparagine). A helical transmembrane segment spans residues 851–871 (AFIIVFEHLVFCIKHLISYLI). Residues 872–920 (PDLPKDLRDRMRREKYLIQEMMYEAELERLQKERKERKKNGKAHHNEWP) lie on the Cytoplasmic side of the membrane.

The protein belongs to the anoctamin family.

It is found in the cell membrane. The catalysed reaction is a 1,2-diacyl-sn-glycero-3-phospho-L-serine(in) = a 1,2-diacyl-sn-glycero-3-phospho-L-serine(out). It catalyses the reaction a beta-D-galactosyl-(1&lt;-&gt;1')-N-acylsphing-4-enine(out) = a beta-D-galactosyl-(1&lt;-&gt;1')-N-acylsphing-4-enine(in). The enzyme catalyses a 1,2-diacyl-sn-glycero-3-phosphocholine(in) = a 1,2-diacyl-sn-glycero-3-phosphocholine(out). Its function is as follows. Has calcium-dependent phospholipid scramblase activity; scrambles phosphatidylserine, phosphatidylcholine and galactosylceramide. Does not exhibit calcium-activated chloride channel (CaCC) activity. The sequence is that of Anoctamin-4 from Bos taurus (Bovine).